The chain runs to 306 residues: tRNA dimethylallyltransferase (306 aa).

Residue 14-21 participates in ATP binding; the sequence is GPTAAGKS. 16-21 provides a ligand contact to substrate; it reads TAAGKS. The segment at 39-42 is interaction with substrate tRNA; sequence DSRL.

This sequence belongs to the IPP transferase family. Monomer. Mg(2+) is required as a cofactor.

The enzyme catalyses adenosine(37) in tRNA + dimethylallyl diphosphate = N(6)-dimethylallyladenosine(37) in tRNA + diphosphate. In terms of biological role, catalyzes the transfer of a dimethylallyl group onto the adenine at position 37 in tRNAs that read codons beginning with uridine, leading to the formation of N6-(dimethylallyl)adenosine (i(6)A). This Synechococcus elongatus (strain ATCC 33912 / PCC 7942 / FACHB-805) (Anacystis nidulans R2) protein is tRNA dimethylallyltransferase.